Here is a 119-residue protein sequence, read N- to C-terminus: Non-specific lipid-transfer protein 12 (119 aa).

An N-terminal signal peptide occupies residues 1 to 24; sequence MAFTPKIITCLIVLTIYMASPTES. 4 disulfide bridges follow: Cys28–Cys75, Cys38–Cys52, Cys53–Cys98, and Cys73–Cys112.

Belongs to the plant LTP family.

Functionally, plant non-specific lipid-transfer proteins transfer phospholipids as well as galactolipids across membranes. May play a role in wax or cutin deposition in the cell walls of expanding epidermal cells and certain secretory tissues. The protein is Non-specific lipid-transfer protein 12 (LTP12) of Arabidopsis thaliana (Mouse-ear cress).